The primary structure comprises 948 residues: Translation initiation factor IF-2 (948 aa).

Disordered regions lie at residues 61–120, 162–243, and 255–285; these read IQAN…PALI, KSRE…TQSA, and QEKD…SHKI. The segment covering 68–78 has biased composition (basic and acidic residues); that stretch reads KNPEQDNKDDL. Low complexity predominate over residues 173-189; that stretch reads SNTNNANSTNNANNVNN. Basic and acidic residues predominate over residues 190–207; the sequence is AKKEISEVKKQEQEIKRH. Residues 208 to 219 show a composition bias toward basic residues; sequence ENIKRRTGFRVI. Residues 230–243 are compositionally biased toward polar residues; that stretch reads ENSVAESKKPTQSA. The tr-type G domain maps to 447-616; sequence ERPPVVTIMG…LIQADIMELK (170 aa). Residues 456–463 are G1; it reads GHVDHGKT. Position 456 to 463 (456 to 463) interacts with GTP; that stretch reads GHVDHGKT. Residues 481 to 485 are G2; the sequence is GITQH. Residues 502-505 form a G3 region; that stretch reads DTPG. Residues 502–506 and 556–559 contribute to the GTP site; these read DTPGH and NKMD. A G4 region spans residues 556 to 559; sequence NKMD. The interval 592-594 is G5; that stretch reads SAK.

Belongs to the TRAFAC class translation factor GTPase superfamily. Classic translation factor GTPase family. IF-2 subfamily.

The protein localises to the cytoplasm. Functionally, one of the essential components for the initiation of protein synthesis. Protects formylmethionyl-tRNA from spontaneous hydrolysis and promotes its binding to the 30S ribosomal subunits. Also involved in the hydrolysis of GTP during the formation of the 70S ribosomal complex. The protein is Translation initiation factor IF-2 of Helicobacter pylori (strain Shi470).